A 452-amino-acid polypeptide reads, in one-letter code: Metacaspase-1 (452 aa).

The segment at 1 to 97 is disordered; it reads MYPGAGRPTY…GPPLQGRPRD (97 aa). Residues 16 to 41 show a composition bias toward low complexity; sequence QKGPYGQPQYQQQYAPPYPERYQQPY. Residues His-238 and Cys-294 contribute to the active site.

It belongs to the peptidase C14B family.

Its function is as follows. Involved in cell death (apoptosis). The protein is Metacaspase-1 (MCA1) of Eremothecium gossypii (strain ATCC 10895 / CBS 109.51 / FGSC 9923 / NRRL Y-1056) (Yeast).